A 491-amino-acid polypeptide reads, in one-letter code: AP-2 complex subunit mu (491 aa).

Phosphoserine occurs at positions 179, 180, and 181. In terms of domain architecture, MHD spans 209-490 (KDEVFLYVNE…ISKAGSYEVR (282 aa)).

This sequence belongs to the adaptor complexes medium subunit family. As to quaternary structure, adaptor protein complex 2 (AP-2) is a heterotetramer composed of two large adaptins (alpha-type subunit APL3 and beta-type subunit APL1), a medium chain (mu-type subunit APM4) and a small adaptin (sigma-type subunit APS2).

The protein localises to the membrane. It is found in the clathrin-coated pit. It localises to the cytoplasmic vesicle. The protein resides in the clathrin-coated vesicle membrane. Functionally, component of the adaptor complexes which link clathrin to receptors in coated vesicles. Clathrin-associated protein complexes are believed to interact with the cytoplasmic tails of membrane proteins, leading to their selection and concentration. This is AP-2 complex subunit mu (APM4) from Saccharomyces cerevisiae (strain ATCC 204508 / S288c) (Baker's yeast).